A 383-amino-acid polypeptide reads, in one-letter code: Sphingosine kinase 1 (383 aa).

The 148-residue stretch at 12-159 (PRPCRVLVLL…MNLLSLHTAS (148 aa)) folds into the DAGKc domain. ATP-binding positions include 22–24 (NPR) and 54–58 (TERQN). 79-82 (SGDG) is a binding site for substrate. Catalysis depends on Asp81, which acts as the Proton donor/acceptor. Residues Glu86 and 111–113 (GSG) each bind ATP. 2 short sequence motifs (nuclear export signal) span residues 147-155 (LSPMNLLSL) and 161-169 (RQLYSVLSL). Asp178 provides a ligand contact to substrate. Positions 185 and 191 each coordinate ATP. Thr193 carries the post-translational modification Phosphothreonine. The residue at position 225 (Ser225) is a Phosphoserine. 340–342 (DGE) is a binding site for ATP. The tract at residues 363–383 (GSSDSPSGRDSQRRPPPEEPI) is disordered. Basic and acidic residues predominate over residues 372 to 383 (DSQRRPPPEEPI).

As to quaternary structure, interacts with ACY1. Binds to calmodulin. Interacts with SPHKAP. Interacts with CIB1, the interaction occurs in a calcium-dependent manner. Interacts with TRAF2. Interacts with EEF1A1; the interaction enhances SPHK1 kinase activity. Requires Mg(2+) as cofactor. In terms of tissue distribution, expressed in microglia (at protein level).

The protein resides in the cytoplasm. It localises to the nucleus. The protein localises to the cell membrane. It is found in the endosome membrane. Its subcellular location is the membrane. The protein resides in the clathrin-coated pit. It localises to the synapse. It catalyses the reaction a sphingoid base + ATP = a sphingoid 1-phosphate + ADP + H(+). The enzyme catalyses L-seryl-[protein] + acetyl-CoA = O-acetyl-L-seryl-[protein] + CoA. It carries out the reaction sphinganine + ATP = sphinganine 1-phosphate + ADP + H(+). The catalysed reaction is sphing-4-enine + ATP = sphing-4-enine 1-phosphate + ADP + H(+). It catalyses the reaction 1-O-hexadecyl-2-amino-sn-glycerol + ATP = 1-O-hexadecyl-2-desoxy-2-amino-sn-glycero-3-phosphate + ADP + H(+). With respect to regulation, acetyltransferase activity increases in presence of the kinase substrate, sphingosine. In Purkinje cells, kinase activity on sphingosine increases in presence of VEGFA. In neurons, kinase activity increases during the first 24h in presence of Amyloid-beta protein 42 to decrease after 96h. Functionally, catalyzes the phosphorylation of sphingosine to form sphingosine 1-phosphate (SPP), a lipid mediator with both intra- and extracellular functions. Also acts on D-erythro-sphingosine and to a lesser extent sphinganine, but not other lipids, such as D,L-threo-dihydrosphingosine, N,N-dimethylsphingosine, diacylglycerol, ceramide, or phosphatidylinositol. In contrast to proapoptotic SPHK2, has a negative effect on intracellular ceramide levels, enhances cell growth and inhibits apoptosis. Involved in the regulation of inflammatory response and neuroinflammation. Via the product sphingosine 1-phosphate, stimulates TRAF2 E3 ubiquitin ligase activity, and promotes activation of NF-kappa-B in response to TNF signaling leading to IL17 secretion. In response to TNF and in parallel to NF-kappa-B activation, negatively regulates RANTES induction through p38 MAPK signaling pathway. Involved in endocytic membrane trafficking induced by sphingosine, recruited to dilate endosomes, also plays a role on later stages of endosomal maturation and membrane fusion independently of its kinase activity. In Purkinje cells, seems to be also involved in the regulation of autophagosome-lysosome fusion upon VEGFA. Has serine acetyltransferase activity on PTGS2/COX2 in an acetyl-CoA dependent manner. The acetyltransferase activity increases in presence of the kinase substrate, sphingosine. During neuroinflammation, through PTGS2 acetylation, promotes neuronal secretion of specialized preresolving mediators (SPMs), especially 15-R-lipoxin A4, which results in an increase of phagocytic microglia. This Rattus norvegicus (Rat) protein is Sphingosine kinase 1 (Sphk1).